We begin with the raw amino-acid sequence, 1562 residues long: E3 ubiquitin-protein ligase listerin (1562 aa).

14 HEAT repeats span residues 41 to 78 (SLYS…DFNQ), 127 to 164 (KFLK…KDPA), 175 to 217 (EQLL…SAVL), 262 to 301 (ETVL…ITSK), 304 to 348 (LKVC…VSRT), 495 to 532 (SAIS…FLDS), 555 to 592 (STYQ…VALS), 813 to 850 (IRYA…DYNC), 908 to 945 (YYSR…KTVR), 997 to 1037 (FKSL…WLDS), 1047 to 1085 (TVRL…DSLS), 1188 to 1226 (INQS…SDVD), 1263 to 1298 (NSFI…KEAG), and 1299 to 1339 (LINR…NFSP). The RING-type zinc-finger motif lies at 1508–1555 (CAICYSILHAVDRKLPSKTCPTCKNKFHGACLYKWFRSSGNNTCPLCR).

The protein belongs to the LTN1 family. In terms of assembly, component of the ribosome quality control complex (RQC), composed of the E3 ubiquitin ligase RKR1/LTN1, RQC1 and RQC2, as well as CDC48 and its ubiquitin-binding cofactors associated with the 60S ribosomal subunits.

It localises to the nucleus. It is found in the cytoplasm. The protein resides in the cytosol. It carries out the reaction S-ubiquitinyl-[E2 ubiquitin-conjugating enzyme]-L-cysteine + [acceptor protein]-L-lysine = [E2 ubiquitin-conjugating enzyme]-L-cysteine + N(6)-ubiquitinyl-[acceptor protein]-L-lysine.. The protein operates within protein modification; protein ubiquitination. E3 ubiquitin-protein ligase component of the ribosome quality control complex (RQC), a ribosome-associated complex that mediates ubiquitination and extraction of incompletely synthesized nascent chains for proteasomal degradation. Mediates ubiquitination of proteins derived from mRNAs lacking stop codons (non-stop proteins) and other translation arrest products induced by poly-lysine sequences and tandem rare codons. Ubiquitination leads to CDC48 recruitment for extraction and degradation of the incomplete translation product. May indirectly play a role in chromatin function and transcription. This is E3 ubiquitin-protein ligase listerin from Saccharomyces cerevisiae (strain ATCC 204508 / S288c) (Baker's yeast).